Consider the following 188-residue polypeptide: tRNA(Phe) 7-((3-amino-3-carboxypropyl)-4-demethylwyosine(37)-N(4))-methyltransferase (188 aa).

Belongs to the TYW3 family.

The enzyme catalyses 4-demethyl-7-[(3S)-3-amino-3-carboxypropyl]wyosine(37) in tRNA(Phe) + S-adenosyl-L-methionine = 7-[(3S)-3-amino-3-carboxypropyl]wyosine(37) in tRNA(Phe) + S-adenosyl-L-homocysteine + H(+). S-adenosyl-L-methionine-dependent methyltransferase that acts as a component of the wyosine derivatives biosynthesis pathway. Probably methylates N-4 position of wybutosine-86 to produce wybutosine-72. In Aeropyrum pernix (strain ATCC 700893 / DSM 11879 / JCM 9820 / NBRC 100138 / K1), this protein is tRNA(Phe) 7-((3-amino-3-carboxypropyl)-4-demethylwyosine(37)-N(4))-methyltransferase.